The chain runs to 145 residues: MRADREELDLPPPIGGVAIDVVKVEVPATGRTLVLAFVKTCAVLAAVHGLYILHEVDLTTAHKEAEWEFEPLAWRVWLVVFYFGCLSLTVWLLEGSYGGSDHHAARAQSPDVRARRSELDDNIAQMGAVHGLELPRRQVLRRRGT.

This sequence belongs to the adenoviridae leader protein family.

It localises to the host cytoplasm. The protein resides in the host perinuclear region. The polypeptide is I-leader protein (Human adenovirus C serotype 5 (HAdV-5)).